A 267-amino-acid chain; its full sequence is Acetylglutamate kinase (267 aa).

Substrate is bound by residues 53–54 (GG), arginine 75, and asparagine 167.

This sequence belongs to the acetylglutamate kinase family. ArgB subfamily.

It is found in the cytoplasm. It carries out the reaction N-acetyl-L-glutamate + ATP = N-acetyl-L-glutamyl 5-phosphate + ADP. It participates in amino-acid biosynthesis; L-arginine biosynthesis; N(2)-acetyl-L-ornithine from L-glutamate: step 2/4. Functionally, catalyzes the ATP-dependent phosphorylation of N-acetyl-L-glutamate. The chain is Acetylglutamate kinase from Shewanella pealeana (strain ATCC 700345 / ANG-SQ1).